A 297-amino-acid chain; its full sequence is N-acetylneuraminate lyase (297 aa).

Aceneuramate contacts are provided by Ser47 and Thr48. The active-site Proton donor is Tyr137. Residue Lys165 is the Schiff-base intermediate with substrate of the active site. The aceneuramate site is built by Thr167, Gly189, Asp191, Glu192, and Ser208.

It belongs to the DapA family. NanA subfamily. In terms of assembly, homotetramer.

It is found in the cytoplasm. It catalyses the reaction aceneuramate = aldehydo-N-acetyl-D-mannosamine + pyruvate. It participates in amino-sugar metabolism; N-acetylneuraminate degradation; D-fructose 6-phosphate from N-acetylneuraminate: step 1/5. In terms of biological role, catalyzes the reversible aldol cleavage of N-acetylneuraminic acid (sialic acid; Neu5Ac) to form pyruvate and N-acetylmannosamine (ManNAc) via a Schiff base intermediate. This chain is N-acetylneuraminate lyase, found in Enterobacter sp. (strain 638).